The following is a 936-amino-acid chain: Periplasmic nitrate reductase (936 aa).

Residues 1-31 (MALSRRDFLKSSAAAAAASAVGLSVPKEVEA) constitute a signal peptide (tat-type signal). Residues 40–96 (WRWDKAVCRFCGTGCGIMIATKDDRIVAVKGDPLAPVNRGLNCIKGYFTAKIMYGAD) enclose the 4Fe-4S Mo/W bis-MGD-type domain. [4Fe-4S] cluster contacts are provided by Cys47, Cys50, Cys54, and Cys82. Mo-bis(molybdopterin guanine dinucleotide) is bound by residues Lys84, Gln152, Asn177, Cys181, 214 to 221 (WGSNMAEM), 246 to 250 (STYTH), Met424, Gln428, Asn534, 559 to 560 (SD), Lys582, Asp609, and 826 to 835 (TGRVLEHWHS). Residue Trp902 coordinates substrate. Mo-bis(molybdopterin guanine dinucleotide) contacts are provided by Asn910 and Lys927.

The protein belongs to the prokaryotic molybdopterin-containing oxidoreductase family. NasA/NapA/NarB subfamily. Component of the periplasmic nitrate reductase NapAB complex composed of NapA and NapB. It depends on [4Fe-4S] cluster as a cofactor. The cofactor is Mo-bis(molybdopterin guanine dinucleotide). Predicted to be exported by the Tat system. The position of the signal peptide cleavage has not been experimentally proven.

Its subcellular location is the periplasm. It carries out the reaction 2 Fe(II)-[cytochrome] + nitrate + 2 H(+) = 2 Fe(III)-[cytochrome] + nitrite + H2O. Catalytic subunit of the periplasmic nitrate reductase complex NapAB. Receives electrons from NapB and catalyzes the reduction of nitrate to nitrite. The protein is Periplasmic nitrate reductase of Nitratiruptor sp. (strain SB155-2).